The following is a 220-amino-acid chain: Charged multivesicular body protein 3 (220 aa).

The N-myristoyl glycine moiety is linked to residue G2. Residues 22–54 are a coiled coil; that stretch reads KIRKEMRVIDRQIRDIQREQEKVKRSIKESAKK. Positions 168–169 are important for autoinhibitory function; that stretch reads IL. The tract at residues 196-220 is disordered; it reads AMAASDEEEEEDLEAMQSRLAALRS. Residues 197 to 220 adopt a coiled-coil conformation; that stretch reads MAASDEEEEEDLEAMQSRLAALRS. Residues 200–209 are compositionally biased toward acidic residues; sequence SDEEEEEDLE. Residues 201–209 carry the MIT-interacting motif motif; it reads DEEEEEDLE. 2 interaction with STAMBP regions span residues 203–207 and 219–220; these read EEEED and RS.

It belongs to the SNF7 family. As to quaternary structure, probable core component of the endosomal sorting required for transport complex III (ESCRT-III). ESCRT-III components are thought to multimerize to form a flat lattice on the perimeter membrane of the endosome. Several assembly forms of ESCRT-III may exist that interact and act sequentially.

The protein resides in the cytoplasm. The protein localises to the cytosol. Its subcellular location is the membrane. It localises to the endosome. It is found in the late endosome membrane. In terms of biological role, probable core component of the endosomal sorting required for transport complex III (ESCRT-III) which is involved in multivesicular bodies (MVBs) formation and sorting of endosomal cargo proteins into MVBs. MVBs contain intraluminal vesicles (ILVs) that are generated by invagination and scission from the limiting membrane of the endosome and mostly are delivered to lysosomes enabling degradation of membrane proteins, such as stimulated growth factor receptors, lysosomal enzymes and lipids. Involved in late stages of cytokinesis. Plays a role in endosomal sorting/trafficking of EGF receptor. This chain is Charged multivesicular body protein 3 (chmp3), found in Xenopus tropicalis (Western clawed frog).